The primary structure comprises 525 residues: GMP synthase [glutamine-hydrolyzing] (525 aa).

The 198-residue stretch at 3–200 (KILILDFGSQ…VLHVAGCKPS (198 aa)) folds into the Glutamine amidotransferase type-1 domain. Cys-79 acts as the Nucleophile in catalysis. Residues His-174 and Glu-176 contribute to the active site. The region spanning 201 to 393 (WTMPNYIDEA…LGLPHDMVYR (193 aa)) is the GMPS ATP-PPase domain. 228–234 (SGGVDSS) is an ATP binding site.

In terms of assembly, homodimer.

It catalyses the reaction XMP + L-glutamine + ATP + H2O = GMP + L-glutamate + AMP + diphosphate + 2 H(+). The protein operates within purine metabolism; GMP biosynthesis; GMP from XMP (L-Gln route): step 1/1. In terms of biological role, catalyzes the synthesis of GMP from XMP. This chain is GMP synthase [glutamine-hydrolyzing], found in Chromobacterium violaceum (strain ATCC 12472 / DSM 30191 / JCM 1249 / CCUG 213 / NBRC 12614 / NCIMB 9131 / NCTC 9757 / MK).